Reading from the N-terminus, the 358-residue chain is UDP-N-acetylglucosamine--N-acetylmuramyl-(pentapeptide) pyrophosphoryl-undecaprenol N-acetylglucosamine transferase (358 aa).

UDP-N-acetyl-alpha-D-glucosamine contacts are provided by residues 10–12 (TGG), N124, S196, and Q293.

It belongs to the glycosyltransferase 28 family. MurG subfamily.

The protein resides in the cell membrane. It carries out the reaction di-trans,octa-cis-undecaprenyl diphospho-N-acetyl-alpha-D-muramoyl-L-alanyl-D-glutamyl-meso-2,6-diaminopimeloyl-D-alanyl-D-alanine + UDP-N-acetyl-alpha-D-glucosamine = di-trans,octa-cis-undecaprenyl diphospho-[N-acetyl-alpha-D-glucosaminyl-(1-&gt;4)]-N-acetyl-alpha-D-muramoyl-L-alanyl-D-glutamyl-meso-2,6-diaminopimeloyl-D-alanyl-D-alanine + UDP + H(+). Its pathway is cell wall biogenesis; peptidoglycan biosynthesis. Functionally, cell wall formation. Catalyzes the transfer of a GlcNAc subunit on undecaprenyl-pyrophosphoryl-MurNAc-pentapeptide (lipid intermediate I) to form undecaprenyl-pyrophosphoryl-MurNAc-(pentapeptide)GlcNAc (lipid intermediate II). This is UDP-N-acetylglucosamine--N-acetylmuramyl-(pentapeptide) pyrophosphoryl-undecaprenol N-acetylglucosamine transferase from Exiguobacterium sp. (strain ATCC BAA-1283 / AT1b).